The chain runs to 177 residues: Large ribosomal subunit protein uL6 (177 aa).

The protein belongs to the universal ribosomal protein uL6 family. As to quaternary structure, part of the 50S ribosomal subunit.

This protein binds to the 23S rRNA, and is important in its secondary structure. It is located near the subunit interface in the base of the L7/L12 stalk, and near the tRNA binding site of the peptidyltransferase center. This Rhizorhabdus wittichii (strain DSM 6014 / CCUG 31198 / JCM 15750 / NBRC 105917 / EY 4224 / RW1) (Sphingomonas wittichii) protein is Large ribosomal subunit protein uL6.